The sequence spans 243 residues: Ornithine decarboxylase antizyme 3 (243 aa).

Phosphoserine occurs at positions 6, 9, and 12.

Belongs to the ODC antizyme family. Interacts with ODC1 and thereby sterically blocks ODC homodimerization. Interacts with AZIN2; this interaction disrupts the interaction between the antizyme and ODC1. Interacts with GGN. Testis specific. Expressed throughout the differentiation process from spermatids to spermatozoa in the inner part of the seminiferous tubules.

The protein resides in the nucleus. The protein localises to the cytoplasm. Ornithine decarboxylase (ODC) antizyme protein that negatively regulates ODC activity and intracellular polyamine biosynthesis and uptake in response to increased intracellular polyamine levels. Binds to ODC monomers, inhibiting the assembly of the functional ODC homodimers. Does not target the ODC monomers for degradation, which allows a protein synthesis-independent restoration of ODC activity. Stabilizes AZIN2 by interfering with its ubiquitination. Involved in the translocation of AZNI2 from ER-Golgi intermediate compartment (ERGIC) to the cytosol. Probably plays a key role in spermatogenesis by regulating the intracellular concentration of polyamines in haploid germ cells. In Mus musculus (Mouse), this protein is Ornithine decarboxylase antizyme 3 (Oaz3).